A 404-amino-acid polypeptide reads, in one-letter code: WD repeat and SOCS box-containing protein 2 (404 aa).

5 WD repeats span residues 105 to 148, 151 to 191, 195 to 234, 237 to 276, and 291 to 330; these read PPSR…LLLN, GHQD…KQIQ, GHLQWVYCCSISPDCSMLCSAAGEKSVFLWSMRSYTLIRK, GHQSSVVSCDFSPDSALLVTASYDTSVIMWDPYTGERLRS, and VHMSSLRSVCFSPEGLYLATVADDRLLRIWALELKAPVAF. An SOCS box domain is found at 356–404; it reads HVQFWTAPRVLSSLKHLCRKALRSFLTTYQVLALPIPKKMKEFLTYRTF.

The protein operates within protein modification; protein ubiquitination. May be a substrate-recognition component of a SCF-like ECS (Elongin-Cullin-SOCS-box protein) E3 ubiquitin ligase complex which mediates the ubiquitination and subsequent proteasomal degradation of target proteins. In Mus musculus (Mouse), this protein is WD repeat and SOCS box-containing protein 2 (Wsb2).